The following is a 272-amino-acid chain: DNA repair protein RecO (272 aa).

Belongs to the RecO family.

In terms of biological role, involved in DNA repair and RecF pathway recombination. The sequence is that of DNA repair protein RecO from Limosilactobacillus fermentum (strain NBRC 3956 / LMG 18251) (Lactobacillus fermentum).